A 354-amino-acid polypeptide reads, in one-letter code: Guanine nucleotide-binding protein G(o) subunit alpha (354 aa).

The N-myristoyl glycine moiety is linked to residue G2. The S-palmitoyl cysteine moiety is linked to residue C3. Residues 32 to 354 (KDIKLLLLGA…ANNLRGCGLY (323 aa)) form the G-alpha domain. The interval 35–48 (KLLLLGAGESGKST) is G1 motif. GTP contacts are provided by residues 40 to 47 (GAGESGKS), 176 to 182 (LRTRVKT), 201 to 205 (DVGGQ), 270 to 273 (NKKD), and A326. The Mg(2+) site is built by S47 and T182. The tract at residues 174–182 (DILRTRVKT) is G2 motif. The G3 motif stretch occupies residues 197 to 206 (FKLFDVGGQR). Residues 266 to 273 (ILFLNKKD) are G4 motif. Residues 324–329 (TCATDT) form a G5 motif region.

Belongs to the G-alpha family. G(i/o/t/z) subfamily. G proteins are composed of 3 units; alpha, beta and gamma. The alpha chain contains the guanine nucleotide binding site.

In terms of biological role, guanine nucleotide-binding proteins (G proteins) are involved as modulators or transducers in various transmembrane signaling systems. The G(o) protein function is not clear. The chain is Guanine nucleotide-binding protein G(o) subunit alpha from Locusta migratoria (Migratory locust).